The following is a 403-amino-acid chain: 4-hydroxy-3-methylbut-2-en-1-yl diphosphate synthase (flavodoxin) (403 aa).

A compositionally biased stretch (basic and acidic residues) spans 1–16; it reads MNTENPIEKPFRKTGD. The tract at residues 1-31 is disordered; the sequence is MNTENPIEKPFRKTGDPVDLTSESPLHPRRK. [4Fe-4S] cluster is bound by residues cysteine 291, cysteine 294, cysteine 326, and glutamate 333.

Belongs to the IspG family. The cofactor is [4Fe-4S] cluster.

The enzyme catalyses (2E)-4-hydroxy-3-methylbut-2-enyl diphosphate + oxidized [flavodoxin] + H2O + 2 H(+) = 2-C-methyl-D-erythritol 2,4-cyclic diphosphate + reduced [flavodoxin]. It functions in the pathway isoprenoid biosynthesis; isopentenyl diphosphate biosynthesis via DXP pathway; isopentenyl diphosphate from 1-deoxy-D-xylulose 5-phosphate: step 5/6. In terms of biological role, converts 2C-methyl-D-erythritol 2,4-cyclodiphosphate (ME-2,4cPP) into 1-hydroxy-2-methyl-2-(E)-butenyl 4-diphosphate. The chain is 4-hydroxy-3-methylbut-2-en-1-yl diphosphate synthase (flavodoxin) from Bifidobacterium longum (strain NCC 2705).